The chain runs to 220 residues: Phosphatidylinositol phosphate synthase (220 aa).

A run of 2 helical transmembrane segments spans residues 21–46 (LLRA…ALTL) and 52–72 (LFWG…DGAM). 29–32 (DTVT) serves as a coordination point for a CDP-1,2-diacyl-sn-glycerol. Residues aspartate 66 and aspartate 69 each contribute to the Mg(2+) site. A CDP-1,2-diacyl-sn-glycerol is bound by residues glycine 70, arginine 74, and threonine 80. Positions 87 and 91 each coordinate Mg(2+). The active-site Proton acceptor is the aspartate 91. Transmembrane regions (helical) follow at residues 93–110 (VADG…AFGW), 116–134 (VVAT…YVKA), 154–171 (LIIV…GVQW), and 177–194 (MWVL…RMHA).

This sequence belongs to the CDP-alcohol phosphatidyltransferase class-I family. Homodimer. It depends on Mg(2+) as a cofactor.

It localises to the cell membrane. It catalyses the reaction a CDP-1,2-diacyl-sn-glycerol + 1D-myo-inositol 3-phosphate = a 1,2-diacyl-sn-glycero-3-phospho-(1D-myo-inositol-3-phosphate) + CMP + H(+). It carries out the reaction 1,2-di-(9Z-octadecenoyl)-sn-glycero-3-cytidine-5'-diphosphate + 1D-myo-inositol 3-phosphate = 1,2-di-(9Z-octadecenoyl)-sn-glycero-3-phospho-(1D-myo-inositol-3-phosphate) + CMP + H(+). Its pathway is phospholipid metabolism; phosphatidylinositol phosphate biosynthesis. Catalyzes the conjugation of the 1'-hydroxyl group of D-myo-inositol-3-phosphate (also named L-myo-inositol-1-phosphate) with a lipid tail of cytidine diphosphate diacylglycerol (CDP-DAG), forming phosphatidylinositol phosphate (PIP) and CMP. PIP is a precursor of phosphatidylinositol (PI) which is an essential lipid for mycobacteria required for formation of their cell wall. This Mycobacteroides abscessus (strain ATCC 19977 / DSM 44196 / CCUG 20993 / CIP 104536 / JCM 13569 / NCTC 13031 / TMC 1543 / L948) (Mycobacterium abscessus) protein is Phosphatidylinositol phosphate synthase.